A 286-amino-acid chain; its full sequence is Nucleotide-binding protein Sfum_2066 (286 aa).

8-15 (GLSGSGKS) lines the ATP pocket. 59-62 (DIRE) contributes to the GTP binding site.

It belongs to the RapZ-like family.

Functionally, displays ATPase and GTPase activities. The sequence is that of Nucleotide-binding protein Sfum_2066 from Syntrophobacter fumaroxidans (strain DSM 10017 / MPOB).